The primary structure comprises 549 residues: Tigger transposable element-derived protein 7 (549 aa).

The HTH psq-type domain occupies 1 to 52 (MNKRGKYTTLNLEEKMKVLSRIEAGRSLKSVMDEFGISKSTFYDIKKNKKLI). DNA-binding regions (H-T-H motif) lie at residues 28–48 (LKSVMDEFGISKSTFYDIKKN) and 101–132 (VELQAAAERFARCFGRTDFKASTGWLFRFRNR). The region spanning 68–139 (KRKRTTGAKY…RNRHAIGNRK (72 aa)) is the HTH CENPB-type domain. One can recognise a DDE-1 domain in the interval 169-399 (LCLAQLYSGD…VKQITIANAW (231 aa)). Residues 527-549 (FLKPRPHNIKDSFSGPSTSGSNH) form a disordered region. Over residues 540–549 (SGPSTSGSNH) the composition is skewed to polar residues.

It belongs to the tigger transposable element derived protein family. In terms of tissue distribution, expressed in all tissues tested. Higher expression in testis and ovary.

The protein resides in the nucleus. The sequence is that of Tigger transposable element-derived protein 7 (TIGD7) from Homo sapiens (Human).